The sequence spans 238 residues: uncharacterized protein (238 aa).

This is an uncharacterized protein from Mycobacterium tuberculosis (strain ATCC 25618 / H37Rv).